The sequence spans 125 residues: Large ribosomal subunit protein eL8 (125 aa).

The protein belongs to the eukaryotic ribosomal protein eL8 family. In terms of assembly, part of the 50S ribosomal subunit. Probably part of the RNase P complex.

The protein localises to the cytoplasm. Its function is as follows. Multifunctional RNA-binding protein that recognizes the K-turn motif in ribosomal RNA, the RNA component of RNase P, box H/ACA, box C/D and box C'/D' sRNAs. The polypeptide is Large ribosomal subunit protein eL8 (Nanoarchaeum equitans (strain Kin4-M)).